Here is a 346-residue protein sequence, read N- to C-terminus: KH domain-containing, RNA-binding, signal transduction-associated protein 3 (346 aa).

The tract at residues Met-1–Asn-160 is involved in homodimerization. A Glycyl lysine isopeptide (Lys-Gly) (interchain with G-Cter in SUMO2) cross-link involves residue Lys-4. The region spanning Leu-61–Leu-127 is the KH domain. Disordered regions lie at residues Arg-212–Tyr-266 and Gly-317–Tyr-346. Over residues Gly-253–Thr-262 the composition is skewed to pro residues.

This sequence belongs to the KHDRBS family. In terms of assembly, self-associates to form homooligomers; dimerization increases RNA affinity. Interacts with KHDRBS2/SLM-1. Interacts with KHDRBS1/SAM68; heterooligomer formation of KHDRBS family proteins may modulate RNA substrate specificity. Interacts with the splicing regulatory proteins SFRS9, SAFB and YTHDC1. Interacts with HNRPL, RBMX, p85 subunit of PI3-kinase, SERPINB5. Phosphorylated on tyrosine residues by PTK6. Highly expressed in testis and brain. In adult cerebellum expressed predominantly in internal granular layer interneurons and in hippocampus is exclusively expressed in CA neurons; expression is restricted to neuronal subpopulations largely non-overlapping with expression of KHDRBS2/SLM-1.

It localises to the nucleus. Its function is as follows. RNA-binding protein that plays a role in the regulation of alternative splicing and influences mRNA splice site selection and exon inclusion. Binds preferentially to the 5'-[AU]UAAA-3' motif in vitro. Binds optimally to RNA containing 5'-[AU]UAA-3' as a bipartite motif spaced by more than 15 nucleotides. Binds poly(A). RNA-binding abilities are down-regulated by tyrosine kinase PTK6. Involved in splice site selection of vascular endothelial growth factor. In vitro regulates CD44 alternative splicing by direct binding to purine-rich exonic enhancer. Can regulate alternative splicing of neurexins NRXN1-3 in the laminin G-like domain 6 containing the evolutionary conserved neurexin alternative spliced segment 4 (AS4) involved in neurexin selective targeting to postsynaptic partners such as neuroligins and LRRTM family members. High concentrations in forebrain structures block splicing inclusion of NRXN1-3 AS4 exons while low concentrations favor their inclusion. Targeted, cell-type specific splicing regulation of NRXN1 at AS4 is involved in neuronal glutamatergic synapse function and plasticity and is linked to behavioral aspects. Regulates expression of KHDRBS2/SLIM-1 in defined neuron populations in the hippocampus by modifying its alternative splicing resulting in a transcript predicted to undergo nonsense-mediated decay. Can bind FABP9 mRNA. May play a role as a negative regulator of cell growth. Inhibits cell proliferation. The chain is KH domain-containing, RNA-binding, signal transduction-associated protein 3 (Khdrbs3) from Mus musculus (Mouse).